A 348-amino-acid chain; its full sequence is Quinone oxidoreductase-like protein 1 (348 aa).

The protein belongs to the zinc-containing alcohol dehydrogenase family. Quinone oxidoreductase subfamily. Component of the FERRY complex composed of five subunits, TBCK, PPP1R21, FERRY3, CRYZL1 and GATD1 with a ratio of 1:2:1:2:4, respectively.

The protein resides in the early endosome. Component of the FERRY complex (Five-subunit Endosomal Rab5 and RNA/ribosome intermediary). The FERRY complex directly interacts with mRNAs and RAB5A, and functions as a RAB5A effector involved in the localization and the distribution of specific mRNAs most likely by mediating their endosomal transport. The complex recruits mRNAs and ribosomes to early endosomes through direct mRNA-interaction. This is Quinone oxidoreductase-like protein 1 (Cryzl1) from Mus musculus (Mouse).